The primary structure comprises 118 residues: Large ribosomal subunit protein uL18 (118 aa).

It belongs to the universal ribosomal protein uL18 family. In terms of assembly, part of the 50S ribosomal subunit; part of the 5S rRNA/L5/L18/L25 subcomplex. Contacts the 5S and 23S rRNAs.

Functionally, this is one of the proteins that bind and probably mediate the attachment of the 5S RNA into the large ribosomal subunit, where it forms part of the central protuberance. The chain is Large ribosomal subunit protein uL18 from Nitratiruptor sp. (strain SB155-2).